The following is a 345-amino-acid chain: tRNA dimethylallyltransferase (345 aa).

Residue 9-16 participates in ATP binding; that stretch reads GPTASGKS. 11 to 16 provides a ligand contact to substrate; the sequence is TASGKS. Interaction with substrate tRNA stretches follow at residues 34–37 and 195–199; these read DSMQ and QRMIR.

It belongs to the IPP transferase family. In terms of assembly, monomer. It depends on Mg(2+) as a cofactor.

The enzyme catalyses adenosine(37) in tRNA + dimethylallyl diphosphate = N(6)-dimethylallyladenosine(37) in tRNA + diphosphate. Catalyzes the transfer of a dimethylallyl group onto the adenine at position 37 in tRNAs that read codons beginning with uridine, leading to the formation of N6-(dimethylallyl)adenosine (i(6)A). The polypeptide is tRNA dimethylallyltransferase (Orientia tsutsugamushi (strain Ikeda) (Rickettsia tsutsugamushi)).